A 236-amino-acid chain; its full sequence is Purine nucleoside phosphorylase DeoD-type (236 aa).

H5 is an a purine D-ribonucleoside binding site. Phosphate is bound by residues G21, R25, R44, and 88–91 (RIGS). Residues 180–182 (EME) and 204–205 (SD) each bind a purine D-ribonucleoside. D205 acts as the Proton donor in catalysis.

This sequence belongs to the PNP/UDP phosphorylase family. As to quaternary structure, homohexamer; trimer of homodimers.

The enzyme catalyses a purine D-ribonucleoside + phosphate = a purine nucleobase + alpha-D-ribose 1-phosphate. It catalyses the reaction a purine 2'-deoxy-D-ribonucleoside + phosphate = a purine nucleobase + 2-deoxy-alpha-D-ribose 1-phosphate. Functionally, catalyzes the reversible phosphorolytic breakdown of the N-glycosidic bond in the beta-(deoxy)ribonucleoside molecules, with the formation of the corresponding free purine bases and pentose-1-phosphate. The protein is Purine nucleoside phosphorylase DeoD-type of Tolumonas auensis (strain DSM 9187 / NBRC 110442 / TA 4).